Here is a 356-residue protein sequence, read N- to C-terminus: Poly(rC)-binding protein 1 (356 aa).

Position 1 is an N-acetylmethionine (M1). KH domains follow at residues 13 to 75 (TLTI…FAMI) and 97 to 162 (PVTL…VKQI). A Glycyl lysine isopeptide (Lys-Gly) (interchain with G-Cter in SUMO2) cross-link involves residue K115. A phosphoserine mark is found at S173, S189, S190, S246, S264, and S273. Residues 279 to 343 (QTTHELTIPN…ASISLAQYLI (65 aa)) enclose the KH 3 domain.

Post-translationally, phosphorylated; lowers poly(rC)-binding activity.

The protein resides in the nucleus. Its subcellular location is the cytoplasm. Functionally, single-stranded nucleic acid binding protein that binds preferentially to oligo dC. Together with PCBP2, required for erythropoiesis, possibly by regulating mRNA splicing. This chain is Poly(rC)-binding protein 1 (PCBP1), found in Bos taurus (Bovine).